The following is a 58-amino-acid chain: Small ribosomal subunit protein bS21 (58 aa).

It belongs to the bacterial ribosomal protein bS21 family.

This is Small ribosomal subunit protein bS21 from Staphylococcus aureus (strain bovine RF122 / ET3-1).